The following is a 263-amino-acid chain: Ribonuclease HII (263 aa).

In terms of domain architecture, RNase H type-2 spans Gln-71–Asn-262. Residues Asp-77, Glu-78, and Asp-172 each contribute to the a divalent metal cation site.

The protein belongs to the RNase HII family. Mn(2+) serves as cofactor. It depends on Mg(2+) as a cofactor.

Its subcellular location is the cytoplasm. The catalysed reaction is Endonucleolytic cleavage to 5'-phosphomonoester.. Its function is as follows. Endonuclease that specifically degrades the RNA of RNA-DNA hybrids. The sequence is that of Ribonuclease HII from Streptococcus pyogenes serotype M12 (strain MGAS2096).